The chain runs to 105 residues: Small ribosomal subunit protein uS10 (105 aa).

This sequence belongs to the universal ribosomal protein uS10 family. Part of the 30S ribosomal subunit.

In terms of biological role, involved in the binding of tRNA to the ribosomes. The sequence is that of Small ribosomal subunit protein uS10 from Trichodesmium erythraeum (strain IMS101).